Reading from the N-terminus, the 868-residue chain is Hopanoid transporter HpnN (868 aa).

The next 12 helical transmembrane spans lie at 16-36 (FAAF…FYTY), 273-293 (GAVV…WMAL), 298-318 (IIFA…AVGL), 326-346 (LLSI…GIQF), 370-390 (YSAV…LSFL), 403-423 (IAGA…PALL), 452-472 (IAII…LYFM), 710-730 (IVAS…ILLW), 740-760 (ALTL…CVLI), 762-782 (LPLN…GVAF), 805-825 (AIFF…LSSH), and 834-854 (LLAL…PALM). Residues 299–425 (IFAVAANLVI…ITVLPALLKL (127 aa)) form the SSD domain.

Belongs to the resistance-nodulation-cell division (RND) (TC 2.A.6) family. MmpL subfamily.

The protein localises to the cell inner membrane. Its function is as follows. Essential for hopanoid transport from the cytoplasmic to the outer membrane. Required for the C(35) hopanoid, bacteriohopanetetrol, to remain localized to the mother cell type. In Rhodopseudomonas palustris (strain TIE-1), this protein is Hopanoid transporter HpnN.